The following is a 517-amino-acid chain: MSSLTPPNSNQMSALNNHFFFGLTTPKLEEFAPALEATLAYAVTDERVYERTAPEPPDRSWTTPTAAENPLSAWYVTTSISYTDGGPLAGRTVAIKDNVTVAGVPMMNGSRVVEGFTPRYDATVLRRLLDAGATKAGKAVCEDLCFSGSSVTSHPQPVRNPWDESHGYKAGGSSSGSEALVASGHVDCAVGGDGGGSIRIPLACCGIVGCKPTHGLKPYTFPIERTIDHLGPMTRTVGDAAMMLTVLAGTDGLDPRQADHRIEPVDYLAALAEPAGLRVVVVTEGFDTPVQDAAVDDAVRAAILVLRSGCLTVEIVSIPIHLDAFAVWNVIATEGAAYQMLDGNYYGMNTGGFYDPELIIHFSRRRLEHGHQLSKTVKLVGMGGRYTSETGGGKYAAAARQLVREVRAAYDLALARYDVLVMPTLPYTATKIPITDIPLADYLDTALSMIINTAPFDVTGHPALCPVAGAVHGLPVGMMIIGKAHDDDATVLRVAAFEHAVGNYPVPPEAASTLATL.

Active-site charge relay system residues include Lys-96 and Ser-173. Ser-197 (acyl-ester intermediate) is an active-site residue.

The protein belongs to the amidase family. Homooctamer.

The catalysed reaction is a monocarboxylic acid amide + H2O = a monocarboxylate + NH4(+). This Rhodococcus rhodochrous protein is Enantioselective amidase (amdA).